Consider the following 271-residue polypeptide: Inactive phospholipid phosphatase 7 (271 aa).

The disordered stretch occupies residues 1–69 (MPVSQSRARA…RQSQQLPEED (69 aa)). Over 1 to 112 (MPVSQSRARA…AASWASARSM (112 aa)) the chain is Cytoplasmic. Residues 24–36 (SLNQPPKGTQEPR) are compositionally biased toward polar residues. Ser43 and Ser62 each carry phosphoserine. The interaction with MTOR stretch occupies residues 70-91 (CMQLNPSFKGIAFNSLLAIDIC). A helical membrane pass occupies residues 113–133 (VKLIGITSHGIPWIGGTILCL). Residues 134–141 (VRSSTLAG) lie on the Extracellular side of the membrane. A helical membrane pass occupies residues 142–162 (QEVLMNLLLALLLDIMTVAGV). At 163–202 (QKLIKRRGPYETSPGLLDYLTMDIYAFPAGHASRAAMVSK) the chain is on the cytoplasmic side. A helical membrane pass occupies residues 203 to 223 (FFLSHLVLAVPLRVLLVLWAF). The Extracellular segment spans residues 224 to 239 (CVGLSRVMIGRHHITD). Residues 240 to 260 (VISGFIIGYFQFRLVELVWMS) form a helical membrane-spanning segment. Over 261–271 (SNTCQMLISAW) the chain is Cytoplasmic.

The protein belongs to the PA-phosphatase related phosphoesterase family. Homo- and heterooligomer. Interacts with MTOR; controls MTOR-dependent IGF2 expression during myoblast differentiation.

Its subcellular location is the nucleus envelope. The protein localises to the endoplasmic reticulum membrane. It localises to the membrane. Plays a role as negative regulator of myoblast differentiation, in part through effects on MTOR signaling. Has no detectable enzymatic activity. The polypeptide is Inactive phospholipid phosphatase 7 (Rattus norvegicus (Rat)).